Here is a 209-residue protein sequence, read N- to C-terminus: Protein TIFY 11c (209 aa).

One can recognise a Tify domain in the interval 93–128; it reads EITEKAQLTIFYGGSVVVFDDFPAEKAGELMKLAGS. The Jas signature appears at 153–177; sequence PIARKVSLQRFLEKRKNRIVVAEPL. The Nuclear localization signal motif lies at 155-162; sequence ARKVSLQR. Residues 175-209 form a disordered region; sequence EPLPESEKKEAESSKRAKKDDGGASWLQVNPTLSL. The segment covering 179 to 196 has biased composition (basic and acidic residues); that stretch reads ESEKKEAESSKRAKKDDG.

The protein belongs to the TIFY/JAZ family. Post-translationally, ubiquitinated. Targeted for degradation by the SCF(COI1) E3 ubiquitin ligase-proteasome pathway during jasmonate signaling.

The protein resides in the nucleus. In terms of biological role, repressor of jasmonate responses. The sequence is that of Protein TIFY 11c from Oryza sativa subsp. indica (Rice).